The following is a 49-amino-acid chain: MGAQDPTDEDRHVCRDTGRKQGLVGKYDIWLCRQSFREMARDMGFKKYD.

Belongs to the universal ribosomal protein uS14 family. Zinc-binding uS14 subfamily. In terms of assembly, part of the 30S ribosomal subunit.

Functionally, binds 16S rRNA, required for the assembly of 30S particles. In Natronomonas pharaonis (strain ATCC 35678 / DSM 2160 / CIP 103997 / JCM 8858 / NBRC 14720 / NCIMB 2260 / Gabara) (Halobacterium pharaonis), this protein is Small ribosomal subunit protein uS14B.